The sequence spans 364 residues: Serine/threonine-protein kinase ENV7 (364 aa).

3 S-palmitoyl cysteine lipidation sites follow: Cys13, Cys14, and Cys15. In terms of domain architecture, Protein kinase spans 30 to 364; sequence YRIQRLLGEG…LLNLLQDLDT (335 aa). ATP is bound by residues 36–44 and Lys69; that span reads LGEGGMSFV. Asp215 acts as the Proton acceptor in catalysis.

It belongs to the protein kinase superfamily. Ser/Thr protein kinase family.

It localises to the vacuole membrane. The enzyme catalyses L-seryl-[protein] + ATP = O-phospho-L-seryl-[protein] + ADP + H(+). It catalyses the reaction L-threonyl-[protein] + ATP = O-phospho-L-threonyl-[protein] + ADP + H(+). Its function is as follows. Serine/threonine-protein kinase involved in vacuolar processing and morphology. This Saccharomyces cerevisiae (strain ATCC 204508 / S288c) (Baker's yeast) protein is Serine/threonine-protein kinase ENV7 (ENV7).